The primary structure comprises 122 residues: Small ribosomal subunit protein uS13 (122 aa).

Residues 99–122 are disordered; that stretch reads RGQRTHTNARTRKGPAKAIAGKKK.

Belongs to the universal ribosomal protein uS13 family. In terms of assembly, part of the 30S ribosomal subunit. Forms a loose heterodimer with protein S19. Forms two bridges to the 50S subunit in the 70S ribosome.

In terms of biological role, located at the top of the head of the 30S subunit, it contacts several helices of the 16S rRNA. In the 70S ribosome it contacts the 23S rRNA (bridge B1a) and protein L5 of the 50S subunit (bridge B1b), connecting the 2 subunits; these bridges are implicated in subunit movement. Contacts the tRNAs in the A and P-sites. The polypeptide is Small ribosomal subunit protein uS13 (Rhodopseudomonas palustris (strain TIE-1)).